The sequence spans 123 residues: Large ribosomal subunit protein uL18 (123 aa).

The protein belongs to the universal ribosomal protein uL18 family. As to quaternary structure, part of the 50S ribosomal subunit; part of the 5S rRNA/L5/L18/L25 subcomplex. Contacts the 5S and 23S rRNAs.

This is one of the proteins that bind and probably mediate the attachment of the 5S RNA into the large ribosomal subunit, where it forms part of the central protuberance. The polypeptide is Large ribosomal subunit protein uL18 (Chlamydia trachomatis serovar L2 (strain ATCC VR-902B / DSM 19102 / 434/Bu)).